We begin with the raw amino-acid sequence, 416 residues long: MLLSVPLLLGLLGLAAADPAIYFKEQFLDGDAWTNRWVESKHKSDFGKFVLSSGKFYGDQEKDKGLQTSQDARFYALSARFEPFSNKGQTLVVQFTVKHEQNIDCGGGYVKLFPGGLDQKDMHGDSEYNIMFGPDICGPGTKKVHVIFNYKGKNVLINKDIRCKDDEFTHLYTLIVRPDNTYEVKIDNSQVESGSLEDDWDFLPPKKIKDPDAAKPEDWDERAKIDDPTDSKPEDWDKPEHIPDPDAKKPEDWDEEMDGEWEPPVIQNPEYKGEWKPRQIDNPDYKGTWIHPEIDNPEYSPDANIYAYDSFAVLGLDLWQVKSGTIFDNFLITNDEAYAEEFGNETWGVTKAAEKQMKDKQDEEQRLKEEEEDKKRKEEEEAEDKEDEDDRDEDEDEEDEKEEDEEDATGQAKDEL.

A signal peptide spans 1-17 (MLLSVPLLLGLLGLAAA). The interval 18–197 (DPAIYFKEQF…NSQVESGSLE (180 aa)) is N-domain. Residue Gln-26 participates in Ca(2+) binding. Lys-48 is modified (N6-acetyllysine). Residues Lys-62 and Lys-64 each coordinate Ca(2+). Lys-64 carries the N6-(2-hydroxyisobutyryl)lysine modification. An intrachain disulfide couples Cys-105 to Cys-137. The an alpha-D-glucoside site is built by Tyr-109, Lys-111, Tyr-128, and Asp-135. The residue at position 159 (Lys-159) is an N6-acetyllysine. One copy of the 1-1 repeat lies at 191-202 (VESGSLEDDWDF). Residues 191–255 (VESGSLEDDW…DAKKPEDWDE (65 aa)) form a 4 X approximate repeats region. A disordered region spans residues 193 to 277 (SGSLEDDWDF…NPEYKGEWKP (85 aa)). A P-domain region spans residues 198-308 (DDWDFLPPKK…YSPDANIYAY (111 aa)). Positions 207-251 (KIKDPDAAKPEDWDERAKIDDPTDSKPEDWDKPEHIPDPDAKKPE) are enriched in basic and acidic residues. An N6-acetyllysine modification is found at Lys-209. Repeat copies occupy residues 210 to 221 (DPDAAKPEDWDE), 227 to 238 (DPTDSKPEDWDK), 244 to 255 (DPDAKKPEDWDE), 259 to 269 (GEWEPPVIQNP), 273 to 283 (GEWKPRQIDNP), and 287 to 297 (GTWIHPEIDNP). The interval 237–270 (DKPEHIPDPDAKKPEDWDEEMDGEWEPPVIQNPE) is interaction with PPIB. Over residues 252 to 261 (DWDEEMDGEW) the composition is skewed to acidic residues. Positions 259 to 297 (GEWEPPVIQNPEYKGEWKPRQIDNPDYKGTWIHPEIDNP) are 3 X approximate repeats. Positions 309 to 416 (DSFAVLGLDL…DATGQAKDEL (108 aa)) are C-domain. An alpha-D-glucoside is bound at residue Asp-317. Asp-328 is a binding site for Ca(2+). Positions 350–416 (TKAAEKQMKD…DATGQAKDEL (67 aa)) are disordered. A compositionally biased stretch (basic and acidic residues) spans 352–379 (AAEKQMKDKQDEEQRLKEEEEDKKRKEE). Positions 380–408 (EEAEDKEDEDDRDEDEDEEDEKEEDEEDA) are enriched in acidic residues. Residues 413-416 (KDEL) carry the Prevents secretion from ER motif.

The protein belongs to the calreticulin family. In terms of assembly, monomer. Component of an EIF2 complex at least composed of CELF1/CUGBP1, CALR, CALR3, EIF2S1, EIF2S2, HSP90B1 and HSPA5. Interacts with GABARAP, NR3C1 and TRIM21. Interacts with PPIB and SPACA9. Interacts (via P-domain) with PDIA5. Interacts with PDIA3/ERp57. Interacts with CLCC1. Predentin and odontoblast.

It is found in the endoplasmic reticulum lumen. The protein localises to the cytoplasm. Its subcellular location is the cytosol. The protein resides in the secreted. It localises to the extracellular space. It is found in the extracellular matrix. The protein localises to the cell surface. Its subcellular location is the sarcoplasmic reticulum lumen. The protein resides in the cytoplasmic vesicle. It localises to the secretory vesicle. It is found in the cortical granule. The protein localises to the cytolytic granule. Calcium-binding chaperone that promotes folding, oligomeric assembly and quality control in the endoplasmic reticulum (ER) via the calreticulin/calnexin cycle. This lectin interacts transiently with almost all of the monoglucosylated glycoproteins that are synthesized in the ER. Interacts with the DNA-binding domain of NR3C1 and mediates its nuclear export. Involved in maternal gene expression regulation. May participate in oocyte maturation via the regulation of calcium homeostasis. Present in the cortical granules of non-activated oocytes, is exocytosed during the cortical reaction in response to oocyte activation and might participate in the block to polyspermy. This chain is Calreticulin (Calr), found in Rattus norvegicus (Rat).